Reading from the N-terminus, the 294-residue chain is MTSTVPRELVHRAAVAEVFLTGWSRTAENRFALTAQWPRAHSYFTPVNGCYDPLLASETIRQVGTLLSHAEFGVSFGDQFLMWDLHHSVRPEQAGVGAAPADLELDVICSDIRRRGRRLAGMRYEVTLYCGGQVIATGGAAFDCTSPAVYQRLRGDRVGATGVRPLPQPLAPASVGRFLTTDVVLSATERPLEWQLRVDEQHPVLFDHPVDHVPGMVLMESARQAAQAIDPSRPFLPTTMRSEFSRYAELDRPCWIQAEPLPAADNGDRQVRVTGHQDDTTVFSCLIGTRGAAE.

It belongs to the AfsA family.

It catalyses the reaction a medium-chain 3-oxoacyl-[ACP] + dihydroxyacetone phosphate = a (4-alkanoyl-5-oxo-2,5-dihydrofuran-3-yl)methyl phosphate + holo-[ACP] + H2O. Involved in the biosynthesis of virginiae butanolide (VB), a gamma-butyrolactone autoregulator that triggers the production of the streptogramin antibiotic virginiamycin. This is 2-oxo-3-(phosphooxy)propyl 3-oxoalkanoate synthase from Streptomyces virginiae (Streptomyces cinnamonensis).